Reading from the N-terminus, the 247-residue chain is Flavin-dependent thymidylate synthase (247 aa).

Residues 1–237 (MDVKLLEATD…PKTFEYYEQE (237 aa)) enclose the ThyX domain. DUMP-binding positions include 85–88 (QITR), 98–100 (SMR), and R176. Residue 88 to 90 (RHR) participates in FAD binding. Positions 88 to 98 (RHRHVSFDVQS) match the ThyX motif motif. Residues 192–194 (NAR) and H198 contribute to the FAD site. A dUMP-binding site is contributed by R203. R203 functions as the Involved in ionization of N3 of dUMP, leading to its activation in the catalytic mechanism.

The protein belongs to the thymidylate synthase ThyX family. Homotetramer. It depends on FAD as a cofactor.

It catalyses the reaction dUMP + (6R)-5,10-methylene-5,6,7,8-tetrahydrofolate + NADPH + H(+) = dTMP + (6S)-5,6,7,8-tetrahydrofolate + NADP(+). It participates in pyrimidine metabolism; dTTP biosynthesis. Functionally, catalyzes the reductive methylation of 2'-deoxyuridine-5'-monophosphate (dUMP) to 2'-deoxythymidine-5'-monophosphate (dTMP) while utilizing 5,10-methylenetetrahydrofolate (mTHF) as the methyl donor, and NADPH and FADH(2) as the reductant. This is Flavin-dependent thymidylate synthase from Haloarcula marismortui (strain ATCC 43049 / DSM 3752 / JCM 8966 / VKM B-1809) (Halobacterium marismortui).